A 138-amino-acid chain; its full sequence is Diuretic hormone 1 (138 aa).

A signal peptide spans 1–19; that stretch reads MMWWAIWCVMVVVSSAASA. Residues 20–78 constitute a propeptide that is removed on maturation; sequence APAPDSAPMDLVQIDSAGPDDESLGYAVSSLEGRYGAEAPWLYLLAEMPRDSQIGRAAV. Ile121 is subject to Isoleucine amide. Positions 125-138 are excised as a propeptide; sequence GLQWSRSEQPSAYY.

It belongs to the sauvagine/corticotropin-releasing factor/urotensin I family.

The protein localises to the secreted. Functionally, regulation of fluid secretion. The protein is Diuretic hormone 1 of Manduca sexta (Tobacco hawkmoth).